The primary structure comprises 132 residues: Protein C10 (132 aa).

At alanine 2 the chain carries N-acetylalanine.

Belongs to the UPF0456 family.

Its subcellular location is the cytoplasm. In brain, may be required for corpus callosum development. The chain is Protein C10 from Bos taurus (Bovine).